The following is a 459-amino-acid chain: Putrescine aminotransferase (459 aa).

Residues 150–151 (GT) and Gln-274 each bind pyridoxal 5'-phosphate. N6-(pyridoxal phosphate)lysine is present on Lys-300. Pyridoxal 5'-phosphate is bound at residue Thr-332.

The protein belongs to the class-III pyridoxal-phosphate-dependent aminotransferase family. Putrescine aminotransferase subfamily. Pyridoxal 5'-phosphate serves as cofactor.

It carries out the reaction an alkane-alpha,omega-diamine + 2-oxoglutarate = an omega-aminoaldehyde + L-glutamate. The catalysed reaction is putrescine + 2-oxoglutarate = 1-pyrroline + L-glutamate + H2O. The enzyme catalyses cadaverine + 2-oxoglutarate = 5-aminopentanal + L-glutamate. It participates in amine and polyamine degradation; putrescine degradation; 4-aminobutanal from putrescine (transaminase route): step 1/1. Its function is as follows. Catalyzes the aminotransferase reaction from putrescine to 2-oxoglutarate, leading to glutamate and 4-aminobutanal, which spontaneously cyclizes to form 1-pyrroline. This is the first step in one of two pathways for putrescine degradation, where putrescine is converted into 4-aminobutanoate (gamma-aminobutyrate or GABA) via 4-aminobutanal. Also functions as a cadaverine transaminase in a a L-lysine degradation pathway to succinate that proceeds via cadaverine, glutarate and L-2-hydroxyglutarate. The sequence is that of Putrescine aminotransferase from Escherichia coli (strain K12 / MC4100 / BW2952).